A 98-amino-acid chain; its full sequence is DNA-binding protein Fis (98 aa).

Residues 74-93 (QTRAATMMGINRGTLRKKLK) constitute a DNA-binding region (H-T-H motif).

It belongs to the transcriptional regulatory Fis family. As to quaternary structure, homodimer.

Its function is as follows. Activates ribosomal RNA transcription. Plays a direct role in upstream activation of rRNA promoters. In Photobacterium profundum (strain SS9), this protein is DNA-binding protein Fis.